Consider the following 254-residue polypeptide: RNA polymerase sigma-D factor (254 aa).

Positions 54 to 67 match the Polymerase core binding motif; that stretch reads DLMSLGMLGLYDAL. Positions 220–239 form a DNA-binding region, H-T-H motif; it reads LTEIGQVLNLSTSRISQIHS.

As to quaternary structure, monomer. Interacts transiently with the RNAP core.

In terms of biological role, sigma factors are initiation factors that promote the attachment of RNA polymerase (RNAP) to specific initiation sites and are then released. This alternative sigma factor is required for the transcription of the flagellin and motility genes as well as for wild-type chemotaxis. Associates with the RNAP core during all growth phases with a peak at the transition to stationary phase. This is RNA polymerase sigma-D factor (sigD) from Bacillus subtilis (strain 168).